A 304-amino-acid chain; its full sequence is tRNA pseudouridine synthase A (304 aa).

Aspartate 65 acts as the Nucleophile in catalysis. Tyrosine 123 is a substrate binding site. Residues 274–304 (HTGQEKPEARLGNGDLESREERPPHEMSPLH) form a disordered region. Residues 289 to 298 (LESREERPPH) show a composition bias toward basic and acidic residues.

The protein belongs to the tRNA pseudouridine synthase TruA family. Homodimer.

It carries out the reaction uridine(38/39/40) in tRNA = pseudouridine(38/39/40) in tRNA. Functionally, formation of pseudouridine at positions 38, 39 and 40 in the anticodon stem and loop of transfer RNAs. In Gloeobacter violaceus (strain ATCC 29082 / PCC 7421), this protein is tRNA pseudouridine synthase A.